The primary structure comprises 147 residues: Myoglobin (147 aa).

Positions 2–141 constitute a Globin domain; that stretch reads ADFDAVLKCW…IIADLEANYK (140 aa). Position 60 (His-60) interacts with nitrite. His-60 serves as a coordination point for O2. A heme b-binding site is contributed by His-89.

It belongs to the globin family. As to quaternary structure, monomeric.

It localises to the cytoplasm. The protein localises to the sarcoplasm. The enzyme catalyses Fe(III)-heme b-[protein] + nitric oxide + H2O = Fe(II)-heme b-[protein] + nitrite + 2 H(+). It catalyses the reaction H2O2 + AH2 = A + 2 H2O. Functionally, monomeric heme protein which primary function is to store oxygen and facilitate its diffusion within muscle tissues. Reversibly binds oxygen through a pentacoordinated heme iron and enables its timely and efficient release as needed during periods of heightened demand. Depending on the oxidative conditions of tissues and cells, and in addition to its ability to bind oxygen, it also has a nitrite reductase activity whereby it regulates the production of bioactive nitric oxide. Under stress conditions, like hypoxia and anoxia, it also protects cells against reactive oxygen species thanks to its pseudoperoxidase activity. The protein is Myoglobin (mb) of Thunnus obesus (Bigeye tuna).